The primary structure comprises 94 residues: Integration host factor subunit beta (94 aa).

This sequence belongs to the bacterial histone-like protein family. As to quaternary structure, heterodimer of an alpha and a beta chain.

Its function is as follows. This protein is one of the two subunits of integration host factor, a specific DNA-binding protein that functions in genetic recombination as well as in transcriptional and translational control. The chain is Integration host factor subunit beta from Escherichia fergusonii (strain ATCC 35469 / DSM 13698 / CCUG 18766 / IAM 14443 / JCM 21226 / LMG 7866 / NBRC 102419 / NCTC 12128 / CDC 0568-73).